Reading from the N-terminus, the 78-residue chain is Conotoxin TsMSGL-11 (78 aa).

The first 24 residues, methionine 1 to alanine 24, serve as a signal peptide directing secretion. A propeptide spanning residues glycine 25–threonine 44 is cleaved from the precursor. Disulfide bonds link cysteine 51/cysteine 63, cysteine 55/cysteine 72, and cysteine 62/cysteine 76. Phenylalanine 77 bears the Phenylalanine amide mark.

It belongs to the conotoxin O3 superfamily. In terms of tissue distribution, expressed by the venom duct.

The protein resides in the secreted. The polypeptide is Conotoxin TsMSGL-11 (Conus tessulatus (Tessellate cone)).